A 418-amino-acid polypeptide reads, in one-letter code: F420-non-reducing hydrogenase vhu subunit A (418 aa).

2 residues coordinate Ni(2+): cysteine 61 and cysteine 64.

It belongs to the [NiFe]/[NiFeSe] hydrogenase large subunit family. As to quaternary structure, the F420-non-reducing hydrogenase vhu is composed of four subunits; VhuA, VhuD, VhuG and VhuU. The cofactor is Ni(2+).

In Methanocaldococcus jannaschii (strain ATCC 43067 / DSM 2661 / JAL-1 / JCM 10045 / NBRC 100440) (Methanococcus jannaschii), this protein is F420-non-reducing hydrogenase vhu subunit A (vhuA).